The chain runs to 326 residues: tRNA-modifying protein YgfZ (326 aa).

Residues Trp27 and Trp189 each contribute to the folate site.

Belongs to the tRNA-modifying YgfZ family.

The protein localises to the cytoplasm. Functionally, folate-binding protein involved in regulating the level of ATP-DnaA and in the modification of some tRNAs. It is probably a key factor in regulatory networks that act via tRNA modification, such as initiation of chromosomal replication. This Escherichia fergusonii (strain ATCC 35469 / DSM 13698 / CCUG 18766 / IAM 14443 / JCM 21226 / LMG 7866 / NBRC 102419 / NCTC 12128 / CDC 0568-73) protein is tRNA-modifying protein YgfZ.